Reading from the N-terminus, the 135-residue chain is Cytochrome b5 (135 aa).

In terms of domain architecture, Cytochrome b5 heme-binding spans 4–80 (SKVYSLAEVS…MDEMCVGDID (77 aa)). 2 residues coordinate heme: His39 and His63. The chain crosses the membrane as a helical span at residues 106-126 (FIIKLLQFLVPLIILGVAVGI).

The protein belongs to the cytochrome b5 family.

It is found in the endoplasmic reticulum membrane. The protein resides in the microsome membrane. In terms of biological role, membrane bound hemoprotein which function as an electron carrier for several membrane bound oxygenases. This is Cytochrome b5 from Cuscuta reflexa (Southern Asian dodder).